The following is a 567-amino-acid chain: Urease subunit alpha (567 aa).

In terms of domain architecture, Urease spans 129–567; sequence GGIDAHIHFI…LPLAQLYCLF (439 aa). 3 residues coordinate Ni(2+): H134, H136, and K217. N6-carboxylysine is present on K217. Substrate is bound at residue H219. Positions 246 and 272 each coordinate Ni(2+). H320 (proton donor) is an active-site residue. D360 serves as a coordination point for Ni(2+).

It belongs to the metallo-dependent hydrolases superfamily. Urease alpha subunit family. As to quaternary structure, heterotrimer of UreA (gamma), UreB (beta) and UreC (alpha) subunits. Three heterotrimers associate to form the active enzyme. The cofactor is Ni cation. Post-translationally, carboxylation allows a single lysine to coordinate two nickel ions.

It is found in the cytoplasm. It catalyses the reaction urea + 2 H2O + H(+) = hydrogencarbonate + 2 NH4(+). It functions in the pathway nitrogen metabolism; urea degradation; CO(2) and NH(3) from urea (urease route): step 1/1. The sequence is that of Urease subunit alpha from Alteromonas mediterranea (strain DSM 17117 / CIP 110805 / LMG 28347 / Deep ecotype).